The following is a 540-amino-acid chain: Cytochrome P450 monooxygenase prx8 (540 aa).

The helical transmembrane segment at 50–68 (ALGAAIALFACACAYALVA) threads the bilayer. Residue asparagine 460 is glycosylated (N-linked (GlcNAc...) asparagine). Cysteine 483 is a heme binding site.

The protein belongs to the cytochrome P450 family. Requires heme as cofactor.

The protein resides in the membrane. Its pathway is sesquiterpene biosynthesis. Functionally, cytochrome P450 monooxygenase; part of the gene cluster that mediates the biosynthesis of PR-toxin, a bicyclic sesquiterpene belonging to the eremophilane class and acting as a mycotoxin. The first step of the pathway is catalyzed by the aristolochene synthase which performs the cyclization of trans,trans-farnesyl diphosphate (FPP) to the bicyclic sesquiterpene aristolochene. Following the formation of aristolochene, the non-oxygenated aristolochene is converted to the trioxygenated intermediate eremofortin B, via 7-epi-neopetasone. This conversion appears to involve three enzymes, a hydroxysterol oxidase-like enzyme, the quinone-oxidase prx3 that forms the quinone-type-structure in the bicyclic nucleus of aristolochene with the C8-oxo group and the C-3 hydroxyl group, and the P450 monooxygenase prx9 that introduces the epoxide at the double bond between carbons 1 and 2. No monoxy or dioxy-intermediates have been reported to be released to the broth, so these three early oxidative reactions may be coupled together. Eremofortin B is further oxidized by another P450 monooxygenase, that introduces a second epoxide between carbons 7 and 11 prior to acetylation to eremofortin A by the acetyltransferase prx11. The second epoxidation may be performed by a second P450 monooxygenase. After the acetylation step, eremofortin A is converted to eremofortin C and then to PR-toxin. First the conversion of eremofortin A to eremofortin C proceeds by oxidation of the side chain of the molecule at C-12 and is catalyzed by the short-chain oxidoreductase prx1. The cytochrome P450 monooxygenase prx8 also plays a role in this step. The primary alcohol formed at C-12 is finally oxidized by the short-chain alcohol dehydrogenase prx4 that forms PR-toxin. This Penicillium rubens (strain ATCC 28089 / DSM 1075 / NRRL 1951 / Wisconsin 54-1255) (Penicillium chrysogenum) protein is Cytochrome P450 monooxygenase prx8.